The following is a 513-amino-acid chain: GMP synthase [glutamine-hydrolyzing] (513 aa).

Residues 3–192 (TVVVLDYGSQ…VSKVAKMEKN (190 aa)) enclose the Glutamine amidotransferase type-1 domain. Residue cysteine 80 is the Nucleophile of the active site. Active-site residues include histidine 166 and glutamate 168. The GMPS ATP-PPase domain maps to 193-388 (WKMTDFIEEK…LGLPDEMINR (196 aa)). 220–226 (SGGVDSS) serves as a coordination point for ATP.

In terms of assembly, homodimer.

The catalysed reaction is XMP + L-glutamine + ATP + H2O = GMP + L-glutamate + AMP + diphosphate + 2 H(+). It participates in purine metabolism; GMP biosynthesis; GMP from XMP (L-Gln route): step 1/1. Catalyzes the synthesis of GMP from XMP. This chain is GMP synthase [glutamine-hydrolyzing], found in Thermosipho africanus (strain TCF52B).